The sequence spans 228 residues: Cytochrome b6-f complex iron-sulfur subunit 2, chloroplastic (228 aa).

The transit peptide at 1–49 (MASSTLSPVTQLCSSKSGLSSVSQCLLLKPMKINSHGLGKDKRMKVKCM) directs the protein to the chloroplast. The helical transmembrane segment at 71–91 (LLLGALSLPTAGMLVPYATFF) threads the bilayer. A Rieske domain is found at 115–211 (ASEWLKTHPP…ADIDDGKVVF (97 aa)). [2Fe-2S] cluster contacts are provided by cysteine 157, histidine 159, cysteine 175, and histidine 178. A disulfide bridge links cysteine 162 with cysteine 177.

This sequence belongs to the Rieske iron-sulfur protein family. In terms of assembly, the 4 large subunits of the cytochrome b6-f complex are cytochrome b6, subunit IV (17 kDa polypeptide, petD), cytochrome f and the Rieske protein, while the 4 small subunits are petG, petL, petM and petN. The complex functions as a dimer. [2Fe-2S] cluster serves as cofactor.

The protein resides in the plastid. Its subcellular location is the chloroplast thylakoid membrane. The catalysed reaction is 2 oxidized [plastocyanin] + a plastoquinol + 2 H(+)(in) = 2 reduced [plastocyanin] + a plastoquinone + 4 H(+)(out). Its function is as follows. Component of the cytochrome b6-f complex, which mediates electron transfer between photosystem II (PSII) and photosystem I (PSI), cyclic electron flow around PSI, and state transitions. The polypeptide is Cytochrome b6-f complex iron-sulfur subunit 2, chloroplastic (petC2) (Nicotiana tabacum (Common tobacco)).